The following is a 100-amino-acid chain: Urease subunit gamma (100 aa).

The protein belongs to the urease gamma subunit family. As to quaternary structure, heterotrimer of UreA (gamma), UreB (beta) and UreC (alpha) subunits. Three heterotrimers associate to form the active enzyme.

The protein resides in the cytoplasm. The enzyme catalyses urea + 2 H2O + H(+) = hydrogencarbonate + 2 NH4(+). It functions in the pathway nitrogen metabolism; urea degradation; CO(2) and NH(3) from urea (urease route): step 1/1. The protein is Urease subunit gamma of Staphylococcus saprophyticus subsp. saprophyticus (strain ATCC 15305 / DSM 20229 / NCIMB 8711 / NCTC 7292 / S-41).